The primary structure comprises 160 residues: MATLKKPDLSDPKLRAKLAKGMGHNYYGEPAWPNDLLYVFPVVIMGTFACIVALSVLDPAMVGEPADPFATPLEILPEWYLYPVFQILRSVPNKLLGVLLMASVPLGLILVPFIENVNKFQNPFRRPVATTIFLFGTLVTIWLGIGATFPLDKTLTLGLF.

At 1 to 35 the chain is on the cytoplasmic side; it reads MATLKKPDLSDPKLRAKLAKGMGHNYYGEPAWPND. Residues 36 to 56 form a helical membrane-spanning segment; that stretch reads LLYVFPVVIMGTFACIVALSV. Topologically, residues 57–94 are lumenal, thylakoid; it reads LDPAMVGEPADPFATPLEILPEWYLYPVFQILRSVPNK. The chain crosses the membrane as a helical span at residues 95–115; sequence LLGVLLMASVPLGLILVPFIE. The Cytoplasmic segment spans residues 116 to 130; it reads NVNKFQNPFRRPVAT. Residues 131–151 form a helical membrane-spanning segment; that stretch reads TIFLFGTLVTIWLGIGATFPL. Residues 152–160 lie on the Lumenal, thylakoid side of the membrane; that stretch reads DKTLTLGLF.

Belongs to the cytochrome b family. PetD subfamily. As to quaternary structure, the 4 large subunits of the cytochrome b6-f complex are cytochrome b6, subunit IV (17 kDa polypeptide, PetD), cytochrome f and the Rieske protein, while the 4 small subunits are PetG, PetL, PetM and PetN. The complex functions as a dimer.

It is found in the cellular thylakoid membrane. Functionally, component of the cytochrome b6-f complex, which mediates electron transfer between photosystem II (PSII) and photosystem I (PSI), cyclic electron flow around PSI, and state transitions. The sequence is that of Cytochrome b6-f complex subunit 4 from Mastigocladus laminosus (Fischerella sp.).